A 270-amino-acid chain; its full sequence is Chlorophyll a-b binding protein 7, chloroplastic (270 aa).

Residues Met-1–Val-42 constitute a chloroplast transit peptide. Residue Trp-68 participates in chlorophyll b binding. Chlorophyll a is bound by residues Phe-88, Glu-107, and His-110. Residue Arg-112 participates in chlorophyll b binding. The helical transmembrane segment at Trp-113–Leu-133 threads the bilayer. Gln-144 contacts chlorophyll a. The chain crosses the membrane as a helical span at residues Tyr-146–Gly-166. Positions 155, 165, and 168 each coordinate chlorophyll b. Residues Lys-221, Glu-222, Asn-225, Arg-227, Gln-239, and His-254 each coordinate chlorophyll a. The helical transmembrane segment at Leu-228–Ile-248 threads the bilayer.

It belongs to the light-harvesting chlorophyll a/b-binding (LHC) protein family. As to quaternary structure, the LHC complex consists of chlorophyll a-b binding proteins. It depends on Binds at least 14 chlorophylls (8 Chl-a and 6 Chl-b) and carotenoids such as lutein and neoxanthin. as a cofactor. Post-translationally, photoregulated by reversible phosphorylation of its threonine residues.

Its subcellular location is the plastid. It localises to the chloroplast thylakoid membrane. Functionally, the light-harvesting complex (LHC) functions as a light receptor, it captures and delivers excitation energy to photosystems with which it is closely associated. This chain is Chlorophyll a-b binding protein 7, chloroplastic (CAB7), found in Solanum lycopersicum (Tomato).